The sequence spans 411 residues: 2,3-bisphosphoglycerate-independent phosphoglycerate mutase (411 aa).

It belongs to the BPG-independent phosphoglycerate mutase family. A-PGAM subfamily.

It catalyses the reaction (2R)-2-phosphoglycerate = (2R)-3-phosphoglycerate. It participates in carbohydrate degradation; glycolysis; pyruvate from D-glyceraldehyde 3-phosphate: step 3/5. Functionally, catalyzes the interconversion of 2-phosphoglycerate and 3-phosphoglycerate. This Methanosphaerula palustris (strain ATCC BAA-1556 / DSM 19958 / E1-9c) protein is 2,3-bisphosphoglycerate-independent phosphoglycerate mutase.